The primary structure comprises 681 residues: Calpain-C (681 aa).

One can recognise a Calpain catalytic domain in the interval 18–331; that stretch reads LWEDPDFPAV…FSTMEVVYLD (314 aa). A domain III region spans residues 332–481; it reads TETSNDEEML…ILGTGSFRLS (150 aa). Positions 482–514 are linker; it reads CLETQTMILLDPFPALKSTDAERCGGPKVKSVC. The domain IV stretch occupies residues 515 to 681; that stretch reads QYEPVYMQLA…HDWIKSILSC (167 aa). One can recognise an EF-hand domain in the interval 552–587; that stretch reads ANIDICRQVIALQDRSGSGRITFQQFKTFMVNLKSW. Ca(2+) is bound by residues D565, S567, S569, and R571.

Belongs to the peptidase C2 family. As to expression, localized to the salivary glands in the larva.

It is found in the cytoplasm. In terms of biological role, not known; does not seem to have protease activity. In Drosophila melanogaster (Fruit fly), this protein is Calpain-C.